The chain runs to 221 residues: uncharacterized protein (221 aa).

The segment at residues 77–96 (YRERAVELGVPERAILVEPN) is a DNA-binding region (H-T-H motif).

It to E.coli YdcF.

Functionally, the imp locus inhibits the extrachromosomal maintenance of the streptomyces plasmid SLP1. May function as a transcriptional activator. This is an uncharacterized protein from Streptomyces coelicolor (strain ATCC BAA-471 / A3(2) / M145).